The chain runs to 316 residues: MGLSSSKDIDLLVNFIENRQGATLALPWPEDYRLTLHSVENIPEISREDVQNWAKTYMCCGGELVVVGVIHKAKTRTCRGPIVLQGARGHIYVYNGFFDRSLYHVASSFHDLFSNGLRFFYPIYETCDYALDSTVALDMIAHSKSFSELLHYRNERKNAFFTLKTYPYKTFVRFCNLSMTEFSSRHLIQWRRKLQTSLLDVVFIVQHNFFGDWRELVVVFDGHGMLFCVDREESLLFIARNMSDFLKIGCLRYNENRRLHTQWFTQDTDYIKQVDEMFSRDVLCPLREHCQRSRRERGLLKICTSLVRGVNCIERG.

Belongs to the herpesviridae US22 family.

This chain is Protein U25 (U25), found in Homo sapiens (Human).